Consider the following 146-residue polypeptide: MRNEMNLQFSALSQNESFARVTVAAFIAQLDPTMEELTEIKTVVSEAVTNAIIHGYEGNAEGVVYISVILEEAMVKLTIRDEGIGIFNLDEARQPLFTTKPELERSGMGFTIMENFMDEVEVISNESFGTTIHLTKYLSNSNALCN.

Belongs to the anti-sigma-factor family.

The catalysed reaction is L-seryl-[protein] + ATP = O-phospho-L-seryl-[protein] + ADP + H(+). It catalyses the reaction L-threonyl-[protein] + ATP = O-phospho-L-threonyl-[protein] + ADP + H(+). Binds to sigma F and blocks its ability to form an RNA polymerase holoenzyme (E-sigma F). Phosphorylates SpoIIAA on a serine residue. This phosphorylation may enable SpoIIAA to act as an anti-anti-sigma factor that counteracts SpoIIAB and thus releases sigma F from inhibition. This chain is Anti-sigma F factor, found in Bacillus anthracis (strain A0248).